A 63-amino-acid chain; its full sequence is 2-hydroxymuconate tautomerase (63 aa).

The Proton acceptor; via imino nitrogen role is filled by P2.

It belongs to the 4-oxalocrotonate tautomerase family. As to quaternary structure, homohexamer.

The enzyme catalyses (2Z,4E)-2-hydroxyhexa-2,4-dienedioate = (3E)-2-oxohex-3-enedioate. Its pathway is xenobiotic degradation; toluene degradation. Its function is as follows. Catalyzes the ketonization of 2-hydroxymuconate stereoselectively to yield 2-oxo-3-hexenedioate. In Pseudomonas sp. (strain CF600), this protein is 2-hydroxymuconate tautomerase (dmpI).